Reading from the N-terminus, the 368-residue chain is Agmatine deiminase (368 aa).

The Amidino-cysteine intermediate role is filled by Cys-357.

This sequence belongs to the agmatine deiminase family. Homodimer.

The catalysed reaction is agmatine + H2O = N-carbamoylputrescine + NH4(+). It participates in amine and polyamine biosynthesis; putrescine biosynthesis via agmatine pathway; N-carbamoylputrescine from agmatine: step 1/1. Its function is as follows. Mediates the hydrolysis of agmatine into N-carbamoylputrescine in the arginine decarboxylase (ADC) pathway of putrescine biosynthesis, a basic polyamine. The chain is Agmatine deiminase from Pseudomonas fluorescens (strain ATCC BAA-477 / NRRL B-23932 / Pf-5).